The primary structure comprises 528 residues: Glucose-6-phosphate isomerase (528 aa).

Residue glutamate 322 is the Proton donor of the active site. Catalysis depends on residues histidine 351 and lysine 455.

Belongs to the GPI family.

The protein localises to the cytoplasm. The enzyme catalyses alpha-D-glucose 6-phosphate = beta-D-fructose 6-phosphate. Its pathway is carbohydrate biosynthesis; gluconeogenesis. It participates in carbohydrate degradation; glycolysis; D-glyceraldehyde 3-phosphate and glycerone phosphate from D-glucose: step 2/4. In terms of biological role, catalyzes the reversible isomerization of glucose-6-phosphate to fructose-6-phosphate. This is Glucose-6-phosphate isomerase from Nostoc sp. (strain PCC 7120 / SAG 25.82 / UTEX 2576).